Consider the following 347-residue polypeptide: Dihydroorotate dehydrogenase (quinone) (347 aa).

Residues 65–69 and Thr-89 each bind FMN; that span reads AGLDK. Lys-69 provides a ligand contact to substrate. 114 to 118 contacts substrate; the sequence is NRMGF. Residues Asn-146 and Asn-179 each coordinate FMN. A substrate-binding site is contributed by Asn-179. Ser-182 serves as the catalytic Nucleophile. Asn-184 serves as a coordination point for substrate. Positions 224 and 252 each coordinate FMN. Residue 253–254 participates in substrate binding; sequence NT. FMN is bound by residues Gly-275, Gly-304, and 325–326; that span reads YT.

This sequence belongs to the dihydroorotate dehydrogenase family. Type 2 subfamily. As to quaternary structure, monomer. Requires FMN as cofactor.

The protein resides in the cell membrane. It carries out the reaction (S)-dihydroorotate + a quinone = orotate + a quinol. The protein operates within pyrimidine metabolism; UMP biosynthesis via de novo pathway; orotate from (S)-dihydroorotate (quinone route): step 1/1. In terms of biological role, catalyzes the conversion of dihydroorotate to orotate with quinone as electron acceptor. This chain is Dihydroorotate dehydrogenase (quinone), found in Herminiimonas arsenicoxydans.